A 435-amino-acid chain; its full sequence is Diguanylate cyclase TpbB (435 aa).

The Cytoplasmic segment spans residues 1-22 (MNRRRRYTGSNPSLRRVLYRAH). The helical transmembrane segment at 23–43 (LGVALVAVFTAGLAVTLVGLL) threads the bilayer. At 44–154 (TLRAYADPNQ…VKGSGGSLLR (111 aa)) the chain is on the periplasmic side. Residues 155–175 (FLLTGFAGMVLCLLLTALGAF) traverse the membrane as a helical segment. The Cytoplasmic portion of the chain corresponds to 176–435 (YLSRRLVRGI…DSATPEAPPK (260 aa)). Residues 183 to 236 (RGIVGPLDQLAKVAHTVRRERDFEKRVPEAGIAELSQLGEDFNALLDELESWQA) enclose the HAMP domain. The GGDEF domain maps to 279–415 (EQLAVLFIDS…GSRRLAELND (137 aa)). Mg(2+)-binding residues include Ser-288 and Asp-330. Asp-330 functions as the Proton acceptor in the catalytic mechanism. The span at 413–426 (LNDPRILQEEKEID) shows a compositional bias: basic and acidic residues. The disordered stretch occupies residues 413-435 (LNDPRILQEEKEIDSATPEAPPK).

As to quaternary structure, homodimer. Interacts with YfiR. Mg(2+) serves as cofactor. In terms of processing, phosphorylated at both Tyr residues and Ser/Thr residues. Dephosphorylated and inactivated by TpbA.

The protein resides in the cell inner membrane. It carries out the reaction 2 GTP = 3',3'-c-di-GMP + 2 diphosphate. Its pathway is purine metabolism; 3',5'-cyclic di-GMP biosynthesis. With respect to regulation, activity is tightly controlled by YfiR, a small periplasmic protein, and the OmpA/Pal-like outer-membrane lipoprotein YfiB. Diguanylate cyclase activity is inhibited by the specific interaction of YfiR with the TpbB periplasmic domain and is activated by YfiB, which releases the YfiR-mediated repression through sequestration of YfiR to the outer membrane. Release of repression leads to a conformational shift in TpbB/YfiN that propagates through the PAS and transmembrane domains to switch the cytoplasmic HAMP domain from an inactive to an active conformation and activate the C-terminal catalytic GGDEF domain. Thus, TpbB/YfiN appears to function by switching between discrete inactive and active functional states depending on the presence or absence of bound YfiR. Activity is also controlled by dephosphorylation of the periplasmic domain by the tyrosine phosphatase TpbA. These two mechanisms of regulation could in principle work in parallel or as part of the same regulatory pathway. Does not undergo product feedback inhibition. Functionally, catalyzes the synthesis of cyclic-di-GMP (c-di-GMP) via the condensation of 2 GTP molecules. In terms of biological role, part of the YfiB-TpbB-YfiR (or yfiBNR) system, encoding a tripartite signaling module that modulates intracellular c-di-GMP levels. The system is a key regulator of the small colony variant (SCV) phenotype, and plays an important role in biofilm formation and in vivo persistence. The c-di-GMP produced by TpbB/YfiN stimulates the production of the Pel and Psl exopolysaccharides, which promotes surface attachment, generates an SCV phenotype and confers resistance against phagocytosis. In Pseudomonas aeruginosa (strain ATCC 15692 / DSM 22644 / CIP 104116 / JCM 14847 / LMG 12228 / 1C / PRS 101 / PAO1), this protein is Diguanylate cyclase TpbB.